The sequence spans 651 residues: MSAASLYPVRPEVAATTLTDEATYKAMYQQSVVNPDGFWREQAQRLDWIKPFSVVKQTSFDDHRVDIKWFADGTLNVAYNCLDRHLAERGDTIAIIWEGDNPSEHREITYRELHAEVCKFANALRGQDVHRGDVVTIYMPMIPEAVVAMLACARIGAIHSVVFGGFSPEALAGRIIDCSSKVVITADEGLRGGKKTALKANVDRALTNPETSSVQKVIVCKRTGGEIEWNRHRDIWYHSLLEVASSTCAPKEMGAEESLFILYTSGSTGKPKGVLHTTAGYLLYAALTHERVFDYKPGEIYWCTADVGWVTGHSYIVYGPLANGATTLLFEGVPNYPDITRVSKIIDKHKVNILYTAPTAIRAMMAEGTKSVEGADGSSLRLLGSVGEPINPEAWGWYYNTVGKQNCPIVDTWWQTETGGILISPLPGATALKPGSATRPFFGVIPALVDNLGNLIEGAAEGNLVILDSWPGQSRSLYGDHDRFVDTYFKTFRGMYFTGDGARRDEDGYYWITGRVDDVLNVSGHRMGTAEIESAMVAHPKVAEAAVVGVPHDLKGQGIYVYVTLNGGEEPSDALRTELRNWVRKEIGPIASPDFIQWAPGLPKTRSGKIMRRILRKIATAEYDALGDISTLADPGVVQHLIDTHKTMNAA.

CoA contacts are provided by residues 191 to 194, T311, and N335; that span reads RGGK. ATP contacts are provided by residues 387–389, 411–416, D500, and R515; these read GEP and DTWWQT. S523 lines the CoA pocket. Position 526 (R526) interacts with ATP. Residues V537, H539, and V542 each coordinate Mg(2+). Residue R584 participates in CoA binding. N6-acetyllysine is present on K609.

The protein belongs to the ATP-dependent AMP-binding enzyme family. Mg(2+) serves as cofactor. Acetylated. Deacetylation by the SIR2-homolog deacetylase activates the enzyme.

The enzyme catalyses acetate + ATP + CoA = acetyl-CoA + AMP + diphosphate. In terms of biological role, catalyzes the conversion of acetate into acetyl-CoA (AcCoA), an essential intermediate at the junction of anabolic and catabolic pathways. AcsA undergoes a two-step reaction. In the first half reaction, AcsA combines acetate with ATP to form acetyl-adenylate (AcAMP) intermediate. In the second half reaction, it can then transfer the acetyl group from AcAMP to the sulfhydryl group of CoA, forming the product AcCoA. This Pseudomonas savastanoi pv. phaseolicola (strain 1448A / Race 6) (Pseudomonas syringae pv. phaseolicola (strain 1448A / Race 6)) protein is Acetyl-coenzyme A synthetase.